The sequence spans 375 residues: Quinolinate synthase (375 aa).

The iminosuccinate site is built by H47 and S64. C110 lines the [4Fe-4S] cluster pocket. Iminosuccinate-binding positions include 144–146 and S165; that span reads YVN. C235 serves as a coordination point for [4Fe-4S] cluster. Residues 261 to 263 and T278 each bind iminosuccinate; that span reads HPE. C325 lines the [4Fe-4S] cluster pocket.

This sequence belongs to the quinolinate synthase family. Type 3 subfamily. Requires [4Fe-4S] cluster as cofactor.

Its subcellular location is the cytoplasm. The catalysed reaction is iminosuccinate + dihydroxyacetone phosphate = quinolinate + phosphate + 2 H2O + H(+). It functions in the pathway cofactor biosynthesis; NAD(+) biosynthesis; quinolinate from iminoaspartate: step 1/1. In terms of biological role, catalyzes the condensation of iminoaspartate with dihydroxyacetone phosphate to form quinolinate. The sequence is that of Quinolinate synthase from Herpetosiphon aurantiacus (strain ATCC 23779 / DSM 785 / 114-95).